Here is a 492-residue protein sequence, read N- to C-terminus: Cytochrome P450 2A12 (492 aa).

Cysteine 437 is a binding site for heme.

It belongs to the cytochrome P450 family. It depends on heme as a cofactor. In terms of tissue distribution, liver.

Its subcellular location is the endoplasmic reticulum membrane. The protein resides in the microsome membrane. It catalyses the reaction an organic molecule + reduced [NADPH--hemoprotein reductase] + O2 = an alcohol + oxidized [NADPH--hemoprotein reductase] + H2O + H(+). Highly active in the 7-alpha-hydroxylation of testosterone. This Mus musculus (Mouse) protein is Cytochrome P450 2A12 (Cyp2a12).